The primary structure comprises 281 residues: Protein EMBRYO DEFECTIVE 1674 (281 aa).

2 stretches are compositionally biased toward polar residues: residues Met-1–Ser-14 and Pro-24–Ser-41. A disordered region spans residues Met-1–Thr-47. The SANTA domain maps to Val-66–Tyr-153.

In terms of biological role, required for normal embryo development. The polypeptide is Protein EMBRYO DEFECTIVE 1674 (Arabidopsis thaliana (Mouse-ear cress)).